We begin with the raw amino-acid sequence, 169 residues long: Probable phospholipid hydroperoxide glutathione peroxidase (169 aa).

The active site involves Cys-43.

It belongs to the glutathione peroxidase family. Monomer. Has a tendency to form higher mass oligomers. Interacts with FUNDC1; this interaction promotes GPX4 recruitment into mitochondria through TOM/TIM complex where it is degraded by mitophagy.

It localises to the cytoplasm. It carries out the reaction a hydroperoxy polyunsaturated fatty acid + 2 glutathione = a hydroxy polyunsaturated fatty acid + glutathione disulfide + H2O. Protects cells and enzymes from oxidative damage, by catalyzing the reduction of hydrogen peroxide, lipid peroxides and organic hydroperoxide, by glutathione. The sequence is that of Probable phospholipid hydroperoxide glutathione peroxidase (GPXle-1) from Solanum lycopersicum (Tomato).